We begin with the raw amino-acid sequence, 552 residues long: Probable protein kinase UbiB (552 aa).

One can recognise a Protein kinase domain in the interval 121–504; the sequence is HFDTVPLASA…QGLQRRVVNA (384 aa). Residues 127-135 and lysine 149 each bind ATP; that span reads LASASISQV. Catalysis depends on aspartate 284, which acts as the Proton acceptor. 2 consecutive transmembrane segments (helical) span residues 501 to 521 and 530 to 550; these read VVNA…YGLH and IPVW…SAWW.

This sequence belongs to the ABC1 family. UbiB subfamily.

It localises to the cell inner membrane. Its pathway is cofactor biosynthesis; ubiquinone biosynthesis [regulation]. Functionally, is probably a protein kinase regulator of UbiI activity which is involved in aerobic coenzyme Q (ubiquinone) biosynthesis. This is Probable protein kinase UbiB from Xylella fastidiosa (strain M23).